The following is a 244-amino-acid chain: Large ribosomal subunit protein uL30w (244 aa).

Belongs to the universal ribosomal protein uL30 family.

The polypeptide is Large ribosomal subunit protein uL30w (RPL7D) (Arabidopsis thaliana (Mouse-ear cress)).